The chain runs to 94 residues: Small ubiquitin-related modifier 3-like (94 aa).

K11 is covalently cross-linked (Glycyl lysine isopeptide (Lys-Gly) (interchain with G-Cter in SUMO)). A Ubiquitin-like domain is found at 15–92 (DHINLKVAGQ…IDVFQQQTGG (78 aa)). G92 participates in a covalent cross-link: Glycyl lysine isopeptide (Gly-Lys) (interchain with K-? in acceptor proteins). Residues 93–94 (SC) constitute a propeptide that is removed on maturation.

It belongs to the ubiquitin family. SUMO subfamily. As to quaternary structure, interacts with sae2 and ube2i. Covalently attached to a number of proteins. Polymeric chains can be formed through Lys-11 cross-linking. Post-translationally, cleavage of precursor form by a sentrin-specific protease is necessary for function.

The protein resides in the cytoplasm. Its subcellular location is the nucleus. It localises to the PML body. Ubiquitin-like protein which can be covalently attached to target lysines either as a monomer or as a lysine-linked polymer. Does not seem to be involved in protein degradation and may function as an antagonist of ubiquitin in the degradation process. Plays a role in a number of cellular processes such as nuclear transport, DNA replication and repair, mitosis and signal transduction. Covalent attachment to its substrates requires prior activation by the E1 complex sae1-sae2 and linkage to the E2 enzyme ube2i. This Danio rerio (Zebrafish) protein is Small ubiquitin-related modifier 3-like (sumo3l).